The chain runs to 276 residues: Large ribosomal subunit protein uL2 (276 aa).

The interval 210-276 (GRNRHRGIRP…KLIISRRKGK (67 aa)) is disordered. Basic and acidic residues predominate over residues 230 to 240 (DHPHGGGEGKK). Basic residues predominate over residues 255 to 276 (KGAKTRRKKASDKLIISRRKGK).

This sequence belongs to the universal ribosomal protein uL2 family. Part of the 50S ribosomal subunit. Forms a bridge to the 30S subunit in the 70S ribosome.

Its function is as follows. One of the primary rRNA binding proteins. Required for association of the 30S and 50S subunits to form the 70S ribosome, for tRNA binding and peptide bond formation. It has been suggested to have peptidyltransferase activity; this is somewhat controversial. Makes several contacts with the 16S rRNA in the 70S ribosome. The protein is Large ribosomal subunit protein uL2 of Campylobacter jejuni subsp. jejuni serotype O:6 (strain 81116 / NCTC 11828).